The sequence spans 297 residues: Acetyl-coenzyme A carboxylase carboxyl transferase subunit beta (297 aa).

The 270-residue stretch at 27–296 (LWHKCPSCEA…PEQAREAAAV (270 aa)) folds into the CoA carboxyltransferase N-terminal domain. 4 residues coordinate Zn(2+): C31, C34, C50, and C53. The C4-type zinc finger occupies 31–53 (CPSCEAVLYRPELEKTLDVCPKC).

It belongs to the AccD/PCCB family. As to quaternary structure, acetyl-CoA carboxylase is a heterohexamer composed of biotin carboxyl carrier protein (AccB), biotin carboxylase (AccC) and two subunits each of ACCase subunit alpha (AccA) and ACCase subunit beta (AccD). Zn(2+) is required as a cofactor.

The protein resides in the cytoplasm. It carries out the reaction N(6)-carboxybiotinyl-L-lysyl-[protein] + acetyl-CoA = N(6)-biotinyl-L-lysyl-[protein] + malonyl-CoA. The protein operates within lipid metabolism; malonyl-CoA biosynthesis; malonyl-CoA from acetyl-CoA: step 1/1. Its function is as follows. Component of the acetyl coenzyme A carboxylase (ACC) complex. Biotin carboxylase (BC) catalyzes the carboxylation of biotin on its carrier protein (BCCP) and then the CO(2) group is transferred by the transcarboxylase to acetyl-CoA to form malonyl-CoA. This Pseudomonas putida (strain GB-1) protein is Acetyl-coenzyme A carboxylase carboxyl transferase subunit beta.